Here is a 109-residue protein sequence, read N- to C-terminus: ATPase inhibitor, mitochondrial (109 aa).

The transit peptide at 1–22 (MAGSSSLLRAGIRNVLLMQMRR) directs the protein to the mitochondrion. Positions 27 to 56 (LGELGKGAGKGGGGGGSVREAGGAFGKRQA) are N-terminal inhibitory region. Residues 27-109 (LGELGKGAGK…KSKIKKLNDD (83 aa)) form a disordered region. The segment covering 30 to 43 (LGKGAGKGGGGGGS) has biased composition (gly residues). Composition is skewed to basic and acidic residues over residues 55–69 (QAAE…KEQE) and 77–98 (HHEE…EIER). A coiled-coil region spans residues 71–109 (IASLRKHHEEEIRHHKGEIERLQKEIERHKSKIKKLNDD). Residues 78–109 (HEEEIRHHKGEIERLQKEIERHKSKIKKLNDD) form an antiparallel alpha-helical coiled coil region region. Basic residues predominate over residues 99 to 109 (HKSKIKKLNDD).

Belongs to the ATPase inhibitor family. Homodimer; represents the active form and is present at a pH value below 6.5. Homotetramer; represents the inactive form and is present at a pH value above 7.0.

The protein resides in the mitochondrion. In terms of biological role, endogenous F(1)F(o)-ATPase inhibitor limiting ATP depletion when the mitochondrial membrane potential falls below a threshold and the F(1)F(o)-ATP synthase starts hydrolyzing ATP to pump protons out of the mitochondrial matrix. Required to avoid the consumption of cellular ATP when the F(1)F(o)-ATP synthase enzyme acts as an ATP hydrolase. Indirectly acts as a regulator of heme synthesis in erythroid tissues: regulates heme synthesis by modulating the mitochondrial pH and redox potential, allowing fech to efficiently catalyze the incorporation of iron into protoporphyrin IX to produce heme. In Xenopus tropicalis (Western clawed frog), this protein is ATPase inhibitor, mitochondrial.